Reading from the N-terminus, the 290-residue chain is uncharacterized protein (290 aa).

Residues 7–21 and T100 each bind NAD(+); that span reads AVFG…MAQN. The active site involves K175. K243 lines the NAD(+) pocket.

It belongs to the HIBADH-related family.

This is an uncharacterized protein from Synechocystis sp. (strain ATCC 27184 / PCC 6803 / Kazusa).